The primary structure comprises 213 residues: Thymidylate kinase (213 aa).

Residue 10–17 participates in ATP binding; the sequence is GPDGAGKT.

The protein belongs to the thymidylate kinase family.

The catalysed reaction is dTMP + ATP = dTDP + ADP. Its function is as follows. Phosphorylation of dTMP to form dTDP in both de novo and salvage pathways of dTTP synthesis. In Limosilactobacillus reuteri (strain DSM 20016) (Lactobacillus reuteri), this protein is Thymidylate kinase.